The chain runs to 277 residues: Bifunctional protein FolD (277 aa).

NADP(+)-binding positions include 156–158 (GRS), S183, and I224.

It belongs to the tetrahydrofolate dehydrogenase/cyclohydrolase family. In terms of assembly, homodimer.

The catalysed reaction is (6R)-5,10-methylene-5,6,7,8-tetrahydrofolate + NADP(+) = (6R)-5,10-methenyltetrahydrofolate + NADPH. It catalyses the reaction (6R)-5,10-methenyltetrahydrofolate + H2O = (6R)-10-formyltetrahydrofolate + H(+). Its pathway is one-carbon metabolism; tetrahydrofolate interconversion. In terms of biological role, catalyzes the oxidation of 5,10-methylenetetrahydrofolate to 5,10-methenyltetrahydrofolate and then the hydrolysis of 5,10-methenyltetrahydrofolate to 10-formyltetrahydrofolate. This chain is Bifunctional protein FolD, found in Kosmotoga olearia (strain ATCC BAA-1733 / DSM 21960 / TBF 19.5.1).